The following is a 143-amino-acid chain: Mini-ribonuclease 3 (143 aa).

The active site involves D35.

Belongs to the MrnC RNase family. As to quaternary structure, homodimer. Mg(2+) serves as cofactor.

The protein localises to the cytoplasm. Its function is as follows. Involved in correct processing of both the 5' and 3' ends of 23S rRNA precursor. Processes 30S rRNA precursor transcript even in absence of ribonuclease 3 (Rnc); Rnc processes 30S rRNA into smaller rRNA precursors. This chain is Mini-ribonuclease 3, found in Synechocystis sp. (strain ATCC 27184 / PCC 6803 / Kazusa).